The sequence spans 741 residues: D-(-)-3-hydroxybutyrate oligomer hydrolase (741 aa).

A signal peptide spans 1–23; it reads MKTIQGKSPGRWYSRGMLLAAMA. Positions 45–68 are disordered; it reads NGNAGGNGNNNGNNNGNTVSNTKP. Catalysis depends on S338, which acts as the Charge relay system.

It belongs to the D-(-)-3-hydroxybutyrate oligomer hydrolase family.

The protein resides in the secreted. It catalyses the reaction (3R)-hydroxybutanoate dimer + H2O = 2 (R)-3-hydroxybutanoate + H(+). It participates in lipid metabolism; butanoate metabolism. Participates in the degradation of poly-3-hydroxybutyrate (PHB). It works downstream of poly(3-hydroxybutyrate) depolymerase, hydrolyzing D(-)-3-hydroxybutyrate oligomers of various length (3HB-oligomers) into 3HB-monomers. The protein is D-(-)-3-hydroxybutyrate oligomer hydrolase of Ralstonia pickettii (Burkholderia pickettii).